The following is a 392-amino-acid chain: Solute carrier family 35 member B1 (392 aa).

A disordered region spans residues 1-40 (MSLTKKIKNEKSLKQEKQTDQLKSNLRNNNNNINNKSKPK). Positions 7–20 (IKNEKSLKQEKQTD) are enriched in basic and acidic residues. Positions 25-35 (NLRNNNNNINN) are enriched in low complexity. The next 9 membrane-spanning stretches (helical) occupy residues 57-77 (ELFFIFCVGGIYIFYLLYGLV), 97-117 (AFLLALQCFFNMVSAWLVSLV), 124-144 (NTPFMKYGFVSMLLVISTFLS), 155-175 (TQVLAKSCKPIPVIFMGLLLF), 179-199 (YPFLKYIVVIVISLGISLFML), 215-235 (HLFGNFILFVSLMMDGVMGPF), 247-267 (ATSMMLNTNIWNLGLFSIMAF), 285-305 (VIKLILAFCITSAIGQQFIFL), and 341-361 (LQWAAICMVFGGLILDLYISY). The Di-lysine motif signature appears at 389–392 (KKSL).

It belongs to the nucleotide-sugar transporter family. SLC35B subfamily.

It localises to the endoplasmic reticulum membrane. Probable sugar transporter. The chain is Solute carrier family 35 member B1 (slc35b1) from Dictyostelium discoideum (Social amoeba).